A 711-amino-acid polypeptide reads, in one-letter code: Exotoxin translocation ATP-binding protein PaxB (711 aa).

The Peptidase C39 domain occupies 1-129 (MEPLMSFKQK…QVFQGNVILL (129 aa)). The next 5 membrane-spanning stretches (helical) occupy residues 157 to 177 (IFVEVMIVSIFLQLFALITPL), 195 to 215 (LNVITVALAIVVIFEIVLSGL), 273 to 293 (ALTSVLDLLFSFIFFAVMWYY), 299 to 319 (IVILLSLPCYIAWSIFISPIL), and 392 to 412 (VMIINLWLGAHLVISGDLSIG). In terms of domain architecture, ABC transmembrane type-1 spans 158-440 (FVEVMIVSIF…LAQLWQDFQQ (283 aa)). The ABC transporter domain occupies 472–707 (VTFKNIRFRY…KDGLYYYLNQ (236 aa)). Residue 506–513 (GRSGSGKS) participates in ATP binding.

The protein belongs to the ABC transporter superfamily. Protein-1 exporter (TC 3.A.1.109) family. Homodimer.

It localises to the cell inner membrane. The catalysed reaction is ATP + H2O + proteinSide 1 = ADP + phosphate + proteinSide 2.. In terms of biological role, part of the ABC transporter complex PaxBD involved in PaxA export. Transmembrane domains (TMD) form a pore in the inner membrane and the ATP-binding domain (NBD) is responsible for energy generation. In Pasteurella aerogenes, this protein is Exotoxin translocation ATP-binding protein PaxB (paxB).